The following is a 373-amino-acid chain: MFISEIQLKNYRNYEDLNLSFEDKVNVIIGENAQGKTNLMEAIYVLAMAKSHRTSNDRELIRWDEDYGKIKGRLQKRNSSVSLELNISKKGKKAKLNELEQQKLSQYIGEMNVVMFAPEDLNLVKGSPQVRRRFLDMELGQIAPVYLYELSQYQKVLTQRNHLLKAMQGKNEETMLDVFTLQLIEHGTKILQKRFEFLHLLQEWAAPIHRGISRGLEELEIVYKPSVDVSESMDLSKIKEVYYESFQSVKQREIFRGTTLIGPHRDDLQFFVNSKNVQVFGSQGQQRTTALSLKLAEIELIYAEVKEYPILLLDDVLSELDDYRQSHLLNTIQGKVQTFVTTTSVDGIEHETLKKAKTIHVKSGTVDCEIDRI.

Residue Gly-30–Thr-37 coordinates ATP.

Belongs to the RecF family.

Its subcellular location is the cytoplasm. The RecF protein is involved in DNA metabolism; it is required for DNA replication and normal SOS inducibility. RecF binds preferentially to single-stranded, linear DNA. It also seems to bind ATP. This chain is DNA replication and repair protein RecF, found in Bacillus cytotoxicus (strain DSM 22905 / CIP 110041 / 391-98 / NVH 391-98).